A 552-amino-acid chain; its full sequence is FACT complex subunit POB3 (552 aa).

Positions 190–205 (KKEESSNEVVPKKEDG) are enriched in basic and acidic residues. 2 disordered regions span residues 190–209 (KKEE…AEGE) and 484–552 (QTAL…PKVE). Residues 490-529 (DSDEEDINMGSAGEDDESVDEDFQVSSDNDADEVAEEFDS) show a composition bias toward acidic residues. A compositionally biased stretch (basic and acidic residues) spans 541-552 (DEERPSKKPKVE).

The protein belongs to the SSRP1 family. As to quaternary structure, forms a stable heterodimer with SPT16. The SPT16-POB3 dimer weakly associates with multiple molecules of NHP6 (NHP6A or NHP6B) to form the FACT (yFACT or SNP) complex. The FACT complex interacts with the CK2 (casein kinase II) complex subunits CKA1, CKA2, CKB1 and CKB2 and the components of the transcription machinery CHD1, CTR9, PAF1 and CDC73. The FACT complex interacts with the PAF1 complex. SPT16 interacts with SAS3 and POL1. Interacts directly with RFA1.

The protein localises to the nucleus. The protein resides in the chromosome. Its function is as follows. Component of the FACT complex, a general chromatin factor that acts to reorganize nucleosomes. The FACT complex is involved in multiple processes that require DNA as a template such as mRNA elongation, DNA replication and DNA repair. During transcription elongation the FACT complex acts as a histone chaperone that both destabilizes and restores nucleosomal structure. It facilitates the passage of RNA polymerase II and transcription by promoting the dissociation of one histone H2A-H2B dimer from the nucleosome, then subsequently promotes the reestablishment of the nucleosome following the passage of RNA polymerase II. Transcription elongation is promoted by the repression of transcription initiation from cryptic sites. Also acts in establishing transcription initiation complexes and promotes SPT15/TBP-binding to a TATA box. Together with replication factor-A protein (RPA), FACT may play a role in nucleosome deposition during DNA replication. The polypeptide is FACT complex subunit POB3 (POB3) (Saccharomyces cerevisiae (strain ATCC 204508 / S288c) (Baker's yeast)).